The following is a 235-amino-acid chain: 5'-methylthioadenosine/S-adenosylhomocysteine nucleosidase (235 aa).

The active-site Proton acceptor is the glutamate 13. Substrate-binding positions include glycine 79, methionine 154, and 175 to 176 (ME). Aspartate 199 functions as the Proton donor in the catalytic mechanism.

It belongs to the PNP/UDP phosphorylase family. MtnN subfamily.

The catalysed reaction is S-adenosyl-L-homocysteine + H2O = S-(5-deoxy-D-ribos-5-yl)-L-homocysteine + adenine. The enzyme catalyses S-methyl-5'-thioadenosine + H2O = 5-(methylsulfanyl)-D-ribose + adenine. It carries out the reaction 5'-deoxyadenosine + H2O = 5-deoxy-D-ribose + adenine. It functions in the pathway amino-acid biosynthesis; L-methionine biosynthesis via salvage pathway; S-methyl-5-thio-alpha-D-ribose 1-phosphate from S-methyl-5'-thioadenosine (hydrolase route): step 1/2. Its function is as follows. Catalyzes the irreversible cleavage of the glycosidic bond in both 5'-methylthioadenosine (MTA) and S-adenosylhomocysteine (SAH/AdoHcy) to adenine and the corresponding thioribose, 5'-methylthioribose and S-ribosylhomocysteine, respectively. Also cleaves 5'-deoxyadenosine, a toxic by-product of radical S-adenosylmethionine (SAM) enzymes, into 5-deoxyribose and adenine. This Chromohalobacter salexigens (strain ATCC BAA-138 / DSM 3043 / CIP 106854 / NCIMB 13768 / 1H11) protein is 5'-methylthioadenosine/S-adenosylhomocysteine nucleosidase.